Consider the following 149-residue polypeptide: Transcriptional repressor NrdR (149 aa).

A zinc finger lies at 3-34; the sequence is CPFCSTEETKVIDSRLVSEGYQVRRRRECGNC. The ATP-cone domain maps to 49 to 139; it reads PKVIKNDGTR…VYLSFDDINQ (91 aa).

It belongs to the NrdR family. Zn(2+) is required as a cofactor.

Negatively regulates transcription of bacterial ribonucleotide reductase nrd genes and operons by binding to NrdR-boxes. The chain is Transcriptional repressor NrdR from Pasteurella multocida (strain Pm70).